A 325-amino-acid polypeptide reads, in one-letter code: GMP reductase (325 aa).

Residue Cys-174 is the Thioimidate intermediate of the active site. 203–226 (IIADGGLRTHGDIAKSIRFGATMV) is a binding site for NADP(+).

It belongs to the IMPDH/GMPR family. GuaC type 2 subfamily.

It catalyses the reaction IMP + NH4(+) + NADP(+) = GMP + NADPH + 2 H(+). In terms of biological role, catalyzes the irreversible NADPH-dependent deamination of GMP to IMP. It functions in the conversion of nucleobase, nucleoside and nucleotide derivatives of G to A nucleotides, and in maintaining the intracellular balance of A and G nucleotides. In Staphylococcus epidermidis (strain ATCC 35984 / DSM 28319 / BCRC 17069 / CCUG 31568 / BM 3577 / RP62A), this protein is GMP reductase.